A 179-amino-acid chain; its full sequence is MYVIENPKVPSVYQIEENLKAGVEIEVNGAVLHGNDRDFAIELLSGTNIVLHVKFEFNGEHSIVLNSLINGEWGPQLRHSHFLKRHDPFHVRIYVHEGYYNITVNSDLLVEFDHRFPVVAVQGIGIKGSVDIESIVFKGYEFKTEWKKRHAIVNEAVCEAYDTVTNAPSVVQIEGTQHY.

In terms of domain architecture, Galectin spans 11-138; that stretch reads SVYQIEENLK…SVDIESIVFK (128 aa).

This is Probable galaptin lec-7 (lec-7) from Caenorhabditis elegans.